A 47-amino-acid polypeptide reads, in one-letter code: Putative glycosylation-dependent cell adhesion molecule 1 (47 aa).

Residues 1-18 form the signal peptide; the sequence is MKFFMVLLPASLASTSLA.

Belongs to the PP3/GlyCAM-1 family. In terms of tissue distribution, expressed in cells harvested from milk of lactating women. Not found in other tissues.

This is Putative glycosylation-dependent cell adhesion molecule 1 (GLYCAM1) from Homo sapiens (Human).